The chain runs to 1485 residues: DNA topoisomerase 2 (1485 aa).

Residues 1–16 (MSIDADFSDYEDEASG) show a composition bias toward acidic residues. A disordered region spans residues 1-76 (MSIDADFSDY…NGNGNSNVST (76 aa)). The segment covering 46–59 (DLRQTSLTSMTASE) has biased composition (polar residues). A compositionally biased stretch (low complexity) spans 64-76 (VTNNGNGNSNVST). Residues Asn-136, Asn-165, 193 to 195 (SSN), and 206 to 213 (GRNGYGAK) contribute to the ATP site. Residues 388–392 (KKENK) form an interaction with DNA region. Residue 421–423 (QTK) participates in ATP binding. One can recognise a Toprim domain in the interval 499 to 613 (CVLILTEGDS…SLLQIPGFLI (115 aa)). 3 residues coordinate Mg(2+): Glu-505, Asp-582, and Asp-584. The 451-residue stretch at 745–1195 (IPSVVDGLKP…TPKELWLHDL (451 aa)) folds into the Topo IIA-type catalytic domain. Tyr-835 (O-(5'-phospho-DNA)-tyrosine intermediate) is an active-site residue. The tract at residues 1019-1028 (KLSRTQATSN) is interaction with DNA. The segment covering 1216–1225 (EEQSSRDFVN) has biased composition (basic and acidic residues). The interval 1216–1485 (EEQSSRDFVN…EDVDDYDESD (270 aa)) is disordered. Positions 1226–1242 (RTKKKPRGKSTGTRKPR) are enriched in basic residues. Over residues 1260–1273 (ESKPSTTNRKQQTL) the composition is skewed to polar residues. Basic and acidic residues predominate over residues 1278 to 1307 (ASKEPEKSSDINIVKTEDNSHGLSVEENRI). Phosphoserine is present on residues Ser-1310 and Ser-1345. Residues 1387–1396 (AKNKGKKASS) are compositionally biased toward basic residues. Over residues 1413 to 1425 (GSSSTPKASSTNA) the composition is skewed to polar residues. The residue at position 1433 (Ser-1433) is a Phosphoserine. The span at 1473 to 1485 (DNDEDVDDYDESD) shows a compositional bias: acidic residues.

This sequence belongs to the type II topoisomerase family. As to quaternary structure, homodimer. It depends on Mg(2+) as a cofactor. Mn(2+) is required as a cofactor. Requires Ca(2+) as cofactor. In terms of processing, phosphorylated at multiple sites at both extremities of the protein.

It localises to the nucleus. The catalysed reaction is ATP-dependent breakage, passage and rejoining of double-stranded DNA.. Its function is as follows. Control of topological states of DNA by transient breakage and subsequent rejoining of DNA strands. Topoisomerase II makes double-strand breaks. This chain is DNA topoisomerase 2 (top2), found in Schizosaccharomyces pombe (strain 972 / ATCC 24843) (Fission yeast).